Reading from the N-terminus, the 406-residue chain is Succinylornithine transaminase (406 aa).

Residue lysine 252 is modified to N6-(pyridoxal phosphate)lysine.

The protein belongs to the class-III pyridoxal-phosphate-dependent aminotransferase family. AstC subfamily. Pyridoxal 5'-phosphate serves as cofactor.

It carries out the reaction N(2)-succinyl-L-ornithine + 2-oxoglutarate = N-succinyl-L-glutamate 5-semialdehyde + L-glutamate. The protein operates within amino-acid degradation; L-arginine degradation via AST pathway; L-glutamate and succinate from L-arginine: step 3/5. Functionally, catalyzes the transamination of N(2)-succinylornithine and alpha-ketoglutarate into N(2)-succinylglutamate semialdehyde and glutamate. Can also act as an acetylornithine aminotransferase. The chain is Succinylornithine transaminase from Escherichia coli (strain 55989 / EAEC).